Consider the following 155-residue polypeptide: D-aminoacyl-tRNA deacylase (155 aa).

The short motif at 137–138 (GP) is the Gly-cisPro motif, important for rejection of L-amino acids element.

It belongs to the DTD family. In terms of assembly, homodimer.

The protein localises to the cytoplasm. The enzyme catalyses glycyl-tRNA(Ala) + H2O = tRNA(Ala) + glycine + H(+). The catalysed reaction is a D-aminoacyl-tRNA + H2O = a tRNA + a D-alpha-amino acid + H(+). In terms of biological role, an aminoacyl-tRNA editing enzyme that deacylates mischarged D-aminoacyl-tRNAs. Also deacylates mischarged glycyl-tRNA(Ala), protecting cells against glycine mischarging by AlaRS. Acts via tRNA-based rather than protein-based catalysis; rejects L-amino acids rather than detecting D-amino acids in the active site. By recycling D-aminoacyl-tRNA to D-amino acids and free tRNA molecules, this enzyme counteracts the toxicity associated with the formation of D-aminoacyl-tRNA entities in vivo and helps enforce protein L-homochirality. The chain is D-aminoacyl-tRNA deacylase from Nitrosococcus oceani (strain ATCC 19707 / BCRC 17464 / JCM 30415 / NCIMB 11848 / C-107).